Here is a 285-residue protein sequence, read N- to C-terminus: Diaminopimelate epimerase 2 (285 aa).

Substrate-binding positions include asparagine 11, asparagine 63, 73–74 (GN), asparagine 158, asparagine 191, 209–210 (ER), and 219–220 (GS).

This sequence belongs to the diaminopimelate epimerase family. In terms of assembly, homodimer.

It is found in the cytoplasm. It carries out the reaction (2S,6S)-2,6-diaminopimelate = meso-2,6-diaminopimelate. It functions in the pathway amino-acid biosynthesis; L-lysine biosynthesis via DAP pathway; DL-2,6-diaminopimelate from LL-2,6-diaminopimelate: step 1/1. Catalyzes the stereoinversion of LL-2,6-diaminopimelate (L,L-DAP) to meso-diaminopimelate (meso-DAP), a precursor of L-lysine and an essential component of the bacterial peptidoglycan. The sequence is that of Diaminopimelate epimerase 2 from Nostoc sp. (strain PCC 7120 / SAG 25.82 / UTEX 2576).